Consider the following 970-residue polypeptide: Villin-3 (970 aa).

Gelsolin-like repeat units lie at residues 31–111, 151–219, 273–339, 416–484, 536–576, and 643–714; these read AVPV…ERFL, TVHV…EDGK, VLTR…TVIF, KFYS…PAEF, AIQV…QELA, and NFTQ…PQFF. The disordered stretch occupies residues 741–908; it reads DGVKPKLDKP…EGQPENEEGL (168 aa). Polar residues predominate over residues 755–778; sequence TTSSSHTGRSSVPEKSQRSRSMSF. Residues 833–842 are compositionally biased toward low complexity; the sequence is AASIAAISAS. Residues 878–893 show a composition bias toward polar residues; the sequence is KDSTPSKDSPTVTPTI. The HP domain maps to 905 to 970; it reads EEGLPVYPYE…NRLKIALQLF (66 aa).

Belongs to the villin/gelsolin family. In terms of tissue distribution, expressed in roots, young leaves, and inflorescences, mostly in the vasculature of roots, leaves, and filaments of the anthers and in epidermal cells of the elongation zone and root hairs. Also detected in guard cells.

Its subcellular location is the cytoplasm. It localises to the cytoskeleton. Functionally, ca(2+)-regulated actin-binding protein. Binds actin microfilaments (MFs). Involved in actin filament bundling, severing and capping. Caps the barbed end of actin filaments and is able to sever them in a calcium-dependent manner. MF severing is promoted by VLN1. The polypeptide is Villin-3 (Oryza sativa subsp. japonica (Rice)).